The primary structure comprises 360 residues: Phosphoserine aminotransferase (360 aa).

Arg41 serves as a coordination point for L-glutamate. 4 residues coordinate pyridoxal 5'-phosphate: Trp101, Thr152, Asp172, and Gln195. Residue Lys196 is modified to N6-(pyridoxal phosphate)lysine. 237–238 (NT) is a binding site for pyridoxal 5'-phosphate.

This sequence belongs to the class-V pyridoxal-phosphate-dependent aminotransferase family. SerC subfamily. As to quaternary structure, homodimer. The cofactor is pyridoxal 5'-phosphate.

The protein localises to the cytoplasm. It carries out the reaction O-phospho-L-serine + 2-oxoglutarate = 3-phosphooxypyruvate + L-glutamate. The catalysed reaction is 4-(phosphooxy)-L-threonine + 2-oxoglutarate = (R)-3-hydroxy-2-oxo-4-phosphooxybutanoate + L-glutamate. It functions in the pathway amino-acid biosynthesis; L-serine biosynthesis; L-serine from 3-phospho-D-glycerate: step 2/3. Its pathway is cofactor biosynthesis; pyridoxine 5'-phosphate biosynthesis; pyridoxine 5'-phosphate from D-erythrose 4-phosphate: step 3/5. Functionally, catalyzes the reversible conversion of 3-phosphohydroxypyruvate to phosphoserine and of 3-hydroxy-2-oxo-4-phosphonooxybutanoate to phosphohydroxythreonine. The polypeptide is Phosphoserine aminotransferase (Burkholderia ambifaria (strain ATCC BAA-244 / DSM 16087 / CCUG 44356 / LMG 19182 / AMMD) (Burkholderia cepacia (strain AMMD))).